The primary structure comprises 214 residues: Oxaloacetate tautomerase fahd-1, mitochondrial (214 aa).

3 residues coordinate Mg(2+): E65, E67, and D96.

Belongs to the FAH family. The cofactor is Mg(2+). Mn(2+) serves as cofactor. In terms of tissue distribution, widely expressed.

The protein resides in the mitochondrion. It catalyses the reaction oxaloacetate = enol-oxaloacetate. Tautomerase that converts enol-oxaloacetate, a strong inhibitor of succinate dehydrogenase, to the physiological keto form of oxaloacetate. This chain is Oxaloacetate tautomerase fahd-1, mitochondrial, found in Caenorhabditis elegans.